Reading from the N-terminus, the 276-residue chain is NAC domain-containing protein 67 (276 aa).

The 154-residue stretch at 17–170 folds into the NAC domain; that stretch reads LPPGFRFHPT…DWVLCRLYNK (154 aa).

As to expression, expressed in leaf blades.

The protein localises to the nucleus. In terms of biological role, probable transcription factor involved in stress response. The chain is NAC domain-containing protein 67 from Oryza sativa subsp. japonica (Rice).